A 585-amino-acid chain; its full sequence is Testis-specific serine kinase substrate (585 aa).

Residues 91 to 108 (EPDSSGTDSTTEDSGPLA) show a composition bias toward low complexity. Residues 91 to 125 (EPDSSGTDSTTEDSGPLALPGPPASPTTPWAPEDP) form a disordered region. Serine 224 is subject to Phosphoserine. Disordered stretches follow at residues 264–312 (HGLS…SEQE) and 559–585 (LEGSTGAMGGGSNGGAPPKRGSPGSEQ). The residue at position 281 (serine 281) is a Phosphoserine; by TSSK1 and TSSK2. Serine 309 bears the Phosphoserine mark.

In terms of processing, phosphorylated on serine residue(s) by STK22A/TSSK1 and STK22B/TSSK2. Testis specific.

It localises to the cytoplasm. Its subcellular location is the cytoskeleton. It is found in the microtubule organizing center. The protein resides in the centrosome. The protein localises to the centriole. It localises to the cytoplasmic vesicle. Its subcellular location is the secretory vesicle. It is found in the acrosome. Its function is as follows. May play a role in testicular physiology, most probably in the process of spermatogenesis or spermatid development. This Mus musculus (Mouse) protein is Testis-specific serine kinase substrate (Tsks).